The chain runs to 240 residues: Ribosomal RNA small subunit methyltransferase G (240 aa).

Residues Gly-80, Phe-85, 103–105, 131–132, and Arg-150 each bind S-adenosyl-L-methionine; these read DSS and AE.

It belongs to the methyltransferase superfamily. RNA methyltransferase RsmG family.

It localises to the cytoplasm. Specifically methylates the N7 position of a guanine in 16S rRNA. The sequence is that of Ribosomal RNA small subunit methyltransferase G from Thermoanaerobacter sp. (strain X514).